The following is a 311-amino-acid chain: Probable manganese-dependent inorganic pyrophosphatase (311 aa).

Mn(2+) contacts are provided by His9, Asp13, Asp15, Asp75, His97, and Asp149.

It belongs to the PPase class C family. Mn(2+) is required as a cofactor.

Its subcellular location is the cytoplasm. It catalyses the reaction diphosphate + H2O = 2 phosphate + H(+). In Lactobacillus acidophilus (strain ATCC 700396 / NCK56 / N2 / NCFM), this protein is Probable manganese-dependent inorganic pyrophosphatase.